A 1070-amino-acid polypeptide reads, in one-letter code: [F-actin]-monooxygenase MICAL1 (1070 aa).

The segment at 1-489 (MASTISTNPA…RDLYDMEAKE (489 aa)) is monooxygenase domain. FAD contacts are provided by residues C95, 114–116 (EKR), 121–123 (RHN), F181, Y293, and D393. The residue at position 475 (T475) is a Phosphothreonine. The region spanning 508–612 (VGSQEELLRW…YLSHFHSAFK (105 aa)) is the Calponin-homology (CH) domain. Residues 643-690 (QRTRTQENGEDAGGKKPRLEVKAETPSTEEPPVPKPDEPMTPPSQQQD) are disordered. Residues 646–665 (RTQENGEDAGGKKPRLEVKA) are compositionally biased toward basic and acidic residues. Over residues 671 to 684 (EEPPVPKPDEPMTP) the composition is skewed to pro residues. The LIM zinc-binding domain occupies 695-757 (DLCALCGQHL…LQHLPQTGHE (63 aa)). The Zn(2+) site is built by C697, C700, H718, C721, C724, C727, C747, and H750. Disordered stretches follow at residues 754–838 (TGHE…RSCS) and 865–887 (MEMG…EDVP). The span at 755 to 766 (GHEEDSSDRGPE) shows a compositional bias: basic and acidic residues. Residues 770 to 781 (LPMSSENNTPSG) are compositionally biased toward polar residues. Phosphoserine occurs at positions 793, 875, and 876. Over residues 876–887 (SEEETEEEEDVP) the composition is skewed to acidic residues. Positions 904–1070 (GTMNNYPTWR…ELASEPGVQG (167 aa)) are important for interaction with RAB8A. In terms of domain architecture, bMERB spans 921–1070 (KEEEMKRFCK…ELASEPGVQG (150 aa)). A coiled-coil region spans residues 928–1030 (FCKAQAIQRR…EETLKTAADR (103 aa)). S1060 carries the post-translational modification Phosphoserine.

Belongs to the Mical family. As to quaternary structure, interacts with STK38 and STK38L. Associates with the SH3 domain of NEDD9. Interacts with VIM and PLXNA3. Interacts with RAB1B, RAB8A, RAB10, RAB13 and RAB15 (in their GTP-bound forms); binding to RAB1B is of low affinity compared to other Rab proteins; at least in case of RAB8A and RAB10 can bind 2 molecules of the Rab proteins simultaneously. Interacts with GRAF1/ARHGAP26, GRAF2/ARHGAP10, RAB8A, RAB8B and RAB10; may bind simultaneously to GRAFs and Rabs and connects GRAFs to Rabs. Does not interact with RAB1 and RAB11A. FAD serves as cofactor.

It localises to the cytoplasm. Its subcellular location is the cytoskeleton. It is found in the endosome membrane. The protein resides in the midbody. The enzyme catalyses L-methionyl-[F-actin] + NADPH + O2 + H(+) = L-methionyl-(R)-S-oxide-[F-actin] + NADP(+) + H2O. It carries out the reaction NADPH + O2 + H(+) = H2O2 + NADP(+). Its function is as follows. Monooxygenase that promotes depolymerization of F-actin by mediating oxidation of specific methionine residues on actin to form methionine-sulfoxide, resulting in actin filament disassembly and preventing repolymerization. In the absence of actin, it also functions as a NADPH oxidase producing H(2)O(2). Acts as a cytoskeletal regulator that connects NEDD9 to intermediate filaments. Also acts as a negative regulator of apoptosis via its interaction with STK38 and STK38L; acts by antagonizing STK38 and STK38L activation by MST1/STK4. Involved in regulation of lamina-specific connectivity in the nervous system such as the development of lamina-restricted hippocampal connections. Through redox regulation of the actin cytoskeleton controls the intracellular distribution of secretory vesicles containing L1/neurofascin/NgCAM family proteins in neurons, thereby regulating their cell surface levels. May act as Rab effector protein and play a role in vesicle trafficking. Promotes endosomal tubule extension by associating with RAB8 (RAB8A or RAB8B), RAB10 and GRAF (GRAF1/ARHGAP26 or GRAF2/ARHGAP10) on the endosomal membrane which may connect GRAFs to Rabs, thereby participating in neosynthesized Rab8-Rab10-Rab11-dependent protein export. This Bos taurus (Bovine) protein is [F-actin]-monooxygenase MICAL1 (MICAL1).